The sequence spans 34 residues: Photosystem II reaction center protein Psb30 (34 aa).

The helical transmembrane segment at 6 to 26 threads the bilayer; the sequence is VIGQLVSTGLIGLLGPAVIIL.

This sequence belongs to the Psb30/Ycf12 family. In terms of assembly, PSII is composed of 1 copy each of membrane proteins PsbA, PsbB, PsbC, PsbD, PsbE, PsbF, PsbH, PsbI, PsbJ, PsbK, PsbL, PsbM, PsbT, PsbX, PsbY, PsbZ, Psb30/Ycf12, peripheral proteins of the oxygen-evolving complex and a large number of cofactors. It forms dimeric complexes.

It localises to the plastid. The protein localises to the chloroplast thylakoid membrane. Its function is as follows. A core subunit of photosystem II (PSII), probably helps stabilize the reaction center. The protein is Photosystem II reaction center protein Psb30 of Skeletonema costatum (Marine centric diatom).